Reading from the N-terminus, the 116-residue chain is Putative iron-sulfur cluster insertion protein ErpA (116 aa).

Residues cysteine 44, cysteine 108, and cysteine 110 each contribute to the iron-sulfur cluster site.

This sequence belongs to the HesB/IscA family. Homodimer. Requires iron-sulfur cluster as cofactor.

Its function is as follows. Required for insertion of 4Fe-4S clusters. This Herminiimonas arsenicoxydans protein is Putative iron-sulfur cluster insertion protein ErpA.